Reading from the N-terminus, the 108-residue chain is Immunoglobulin kappa variable 11-125 (108 aa).

Residues 1–23 (DVQMIQSPSSLSASLGDIVTMTC) form a framework-1 region. A disulfide bond links C23 and C88. The segment at 24-34 (QASQGTSINLN) is complementarity-determining-1. The segment at 35–49 (WFQQKPGKAPKLLIY) is framework-2. The tract at residues 50 to 56 (GASILED) is complementarity-determining-2. Residues 57–88 (GVPSRFSGSRYGTDFTLTISSLEDEDMATYFC) are framework-3. Positions 89–97 (LQHSYLPYT) are complementarity-determining-3. Positions 98–108 (FGGGTKLEIKR) are framework-4.

The polypeptide is Immunoglobulin kappa variable 11-125 (Mus musculus (Mouse)).